The sequence spans 417 residues: UDP-N-acetylglucosamine 1-carboxyvinyltransferase (417 aa).

22–23 is a binding site for phosphoenolpyruvate; the sequence is KN. Residue Arg-92 coordinates UDP-N-acetyl-alpha-D-glucosamine. The active-site Proton donor is the Cys-116. 2-(S-cysteinyl)pyruvic acid O-phosphothioketal is present on Cys-116. Positions 304 and 326 each coordinate UDP-N-acetyl-alpha-D-glucosamine.

This sequence belongs to the EPSP synthase family. MurA subfamily.

It localises to the cytoplasm. It catalyses the reaction phosphoenolpyruvate + UDP-N-acetyl-alpha-D-glucosamine = UDP-N-acetyl-3-O-(1-carboxyvinyl)-alpha-D-glucosamine + phosphate. It functions in the pathway cell wall biogenesis; peptidoglycan biosynthesis. In terms of biological role, cell wall formation. Adds enolpyruvyl to UDP-N-acetylglucosamine. In Geotalea uraniireducens (strain Rf4) (Geobacter uraniireducens), this protein is UDP-N-acetylglucosamine 1-carboxyvinyltransferase.